A 1100-amino-acid chain; its full sequence is SLIT-ROBO Rho GTPase-activating protein 2 (1100 aa).

In terms of domain architecture, F-BAR spans 19–324; that stretch reads TQVKEIRAQL…AAENLEANSD (306 aa). Coiled-coil stretches lie at residues 170–201 and 363–400; these read YNMD…HEEK and GELI…IQDM. Residues 181–203 show a composition bias toward basic and acidic residues; that stretch reads LKEAEKQEEKQMSRSVRHEEKQT. Residues 181 to 210 are disordered; it reads LKEAEKQEEKQMSRSVRHEEKQTPRSPDSL. A Rho-GAP domain is found at 496-680; that stretch reads VRKQEAIQII…TIIIHHESIF (185 aa). Residues 738–797 form the SH3 domain; sequence SDPIEAIARFDYSGRTNRELSFKKGASLLLYSRASDDWWEGRHNGTEGLVPHQYIVVQDM. Disordered stretches follow at residues 800-835 and 852-938; these read GYAG…TGGH and EATS…PLDP. Positions 807-823 are enriched in basic and acidic residues; that stretch reads PKADLEGSHDSVEEKVS. Over residues 919 to 932 the composition is skewed to polar residues; sequence RKSTPTGRSKSFSN. A coiled-coil region spans residues 945 to 972; that stretch reads EHSSQDIEATMNTALSELRELERQSNVK. A disordered region spans residues 986 to 1100; the sequence is KSGGTSEPSS…PPPTDKSCPV (115 aa). Composition is skewed to polar residues over residues 987 to 997 and 1008 to 1049; these read SGGTSEPSSPL and SQHP…GSTF. A compositionally biased stretch (low complexity) spans 1067-1081; the sequence is SSSAGGSPAMGSPTT. Residues 1082-1094 show a composition bias toward pro residues; the sequence is TIPPTPPPPPPPT.

It localises to the cell membrane. The protein resides in the cell projection. Its subcellular location is the dendritic spine. It is found in the postsynaptic density. The protein localises to the postsynaptic cell membrane. It localises to the lamellipodium. The protein resides in the cytoplasmic vesicle. Its subcellular location is the phagosome. It is found in the nucleus. The protein localises to the cytoplasm. It localises to the cytosol. In terms of biological role, postsynaptic RAC1 GTPase activating protein (GAP) that plays a key role in neuronal morphogenesis and migration mainly during development of the cerebral cortex. Regulates excitatory and inhibitory synapse maturation and density in cortical pyramidal neurons. Mechanistically, acts by binding and deforming membranes, thereby regulating actin dynamics to regulate cell migration and differentiation. This is SLIT-ROBO Rho GTPase-activating protein 2 (srgap2) from Danio rerio (Zebrafish).